Reading from the N-terminus, the 77-residue chain is Translation initiation factor IF-1, chloroplastic (77 aa).

One can recognise an S1-like domain in the interval 1–71 (MKEQKWIHEG…TRGRIIYRLR (71 aa)).

It belongs to the IF-1 family. Component of the 30S ribosomal translation pre-initiation complex which assembles on the 30S ribosome in the order IF-2 and IF-3, IF-1 and N-formylmethionyl-tRNA(fMet); mRNA recruitment can occur at any time during PIC assembly.

Its subcellular location is the plastid. It localises to the chloroplast. Functionally, one of the essential components for the initiation of protein synthesis. Stabilizes the binding of IF-2 and IF-3 on the 30S subunit to which N-formylmethionyl-tRNA(fMet) subsequently binds. Helps modulate mRNA selection, yielding the 30S pre-initiation complex (PIC). Upon addition of the 50S ribosomal subunit IF-1, IF-2 and IF-3 are released leaving the mature 70S translation initiation complex. The protein is Translation initiation factor IF-1, chloroplastic of Nandina domestica (Heavenly bamboo).